Here is a 296-residue protein sequence, read N- to C-terminus: Acetylglutamate kinase (296 aa).

Substrate contacts are provided by residues glycine 67 to glycine 68, arginine 89, and asparagine 194.

Belongs to the acetylglutamate kinase family. ArgB subfamily.

It is found in the cytoplasm. It catalyses the reaction N-acetyl-L-glutamate + ATP = N-acetyl-L-glutamyl 5-phosphate + ADP. It functions in the pathway amino-acid biosynthesis; L-arginine biosynthesis; N(2)-acetyl-L-ornithine from L-glutamate: step 2/4. In terms of biological role, catalyzes the ATP-dependent phosphorylation of N-acetyl-L-glutamate. The sequence is that of Acetylglutamate kinase from Syntrophus aciditrophicus (strain SB).